Here is a 605-residue protein sequence, read N- to C-terminus: MADMKQEEDELAVDPGVGAVCDPVTKLRFEAIVCLLDRIPITLQQIDMFGQDVAFRTKRIGNIEALLDFLKGSAAATWGARAGAGEPIDASSPELHRLVEDAETAYRDVRGLQPRMVVQMPRVFHKVCLPKLHQLLVIARRLLAQNVALRRLLLQPVGCDVSPMALAEAAVSSDDFERHGRNKVVIDEFGYEDLLRRRHTGHESQNDADDAEQHGREVREGEYEDLILMRHRDTSHELLQDDARRRRADAEAEQQGGDGEVRDEYEDYLCRQLGAVYSGPDQIYEHDMRGPEPAHSPNTPDQIYVPCERMLPYPSNCDNAEDRIHMACLALKNLVKDMEGIYSPRGTLWQYLEDVISLAHALFLENTKLHRFTDQASHQDLPLQPPQGFPFQQQPQHDGYQQPGVPFQQPQQGGYYGHGQGIMFQRGGYLQDVPFQHWQWQQGGYGQGFMFPQAQHQGGYGQGFLSEQPLPGDPSFMNMQAPYDGDGGVLFQKPQHYHHGHVPSEKGAIQAKGKQKMREPKTVMCPDWCRTGHCSSGDGCEYAHSQDELRVIDARPKYRTEPCRYWLAGKGCWYGDKCRYKQHRLAREPLYVDPFLTGHELRNKT.

3 disordered regions span residues 198–218 (RHTG…GREV), 238–261 (LLQD…DGEV), and 375–403 (QASH…YQQP). 2 stretches are compositionally biased toward basic and acidic residues: residues 201–218 (GHES…GREV) and 238–250 (LLQD…RADA). The segment covering 389–403 (FPFQQQPQHDGYQQP) has biased composition (low complexity). 2 consecutive C3H1-type zinc fingers follow at residues 519 to 547 (EPKT…HSQD) and 557 to 585 (KYRT…QHRL).

The chain is Putative zinc finger CCCH domain-containing protein 57 from Oryza sativa subsp. japonica (Rice).